The chain runs to 358 residues: Probable tartrate dehydrogenase/decarboxylase TtuC' (358 aa).

The Mn(2+) site is built by D222, D246, and D250.

It belongs to the isocitrate and isopropylmalate dehydrogenases family. The cofactor is Mg(2+). Mn(2+) serves as cofactor. It depends on K(+) as a cofactor.

It is found in the cytoplasm. It carries out the reaction tartrate + NAD(+) = 2-hydroxy-3-oxosuccinate + NADH + H(+). The catalysed reaction is (2R,3S)-tartrate + NAD(+) = 2-hydroxy-3-oxosuccinate + NADH + H(+). The enzyme catalyses (2R,3R)-tartrate + NAD(+) = 2-hydroxy-3-oxosuccinate + NADH + H(+). It catalyses the reaction (2R,3R)-tartrate + H(+) = (R)-glycerate + CO2. It carries out the reaction (R)-malate + NAD(+) = pyruvate + CO2 + NADH. Its pathway is carbohydrate acid metabolism; tartrate degradation; 2-hydroxy-3-oxosuccinate from L-tartrate: step 1/1. It functions in the pathway carbohydrate acid metabolism; tartrate degradation; 2-hydroxy-3-oxosuccinate from meso-tartrate: step 1/1. The protein operates within carbohydrate acid metabolism; tartrate degradation; D-glycerate from L-tartrate: step 1/1. In terms of biological role, has multiple catalytic activities. Apart from catalyzing the oxidation of (+)-tartrate to oxaloglycolate, also converts meso-tartrate to D-glycerate and catalyzes the oxidative decarboxylation of D-malate to pyruvate. The sequence is that of Probable tartrate dehydrogenase/decarboxylase TtuC' (ttuC') from Agrobacterium vitis (Rhizobium vitis).